The primary structure comprises 474 residues: ATP synthase subunit beta (474 aa).

151 to 158 provides a ligand contact to ATP; it reads GGAGVGKT.

The protein belongs to the ATPase alpha/beta chains family. In terms of assembly, F-type ATPases have 2 components, CF(1) - the catalytic core - and CF(0) - the membrane proton channel. CF(1) has five subunits: alpha(3), beta(3), gamma(1), delta(1), epsilon(1). CF(0) has three main subunits: a(1), b(2) and c(9-12). The alpha and beta chains form an alternating ring which encloses part of the gamma chain. CF(1) is attached to CF(0) by a central stalk formed by the gamma and epsilon chains, while a peripheral stalk is formed by the delta and b chains.

It localises to the cell inner membrane. It carries out the reaction ATP + H2O + 4 H(+)(in) = ADP + phosphate + 5 H(+)(out). In terms of biological role, produces ATP from ADP in the presence of a proton gradient across the membrane. The catalytic sites are hosted primarily by the beta subunits. This is ATP synthase subunit beta from Ruegeria sp. (strain TM1040) (Silicibacter sp.).